The sequence spans 442 residues: Elongation factor 1-alpha 1 (442 aa).

The tr-type G domain maps to 5–227 (KEHLNLVVIG…AALDSFKIPK (223 aa)). The interval 14–21 (GHVDSGKS) is G1. 14 to 21 (GHVDSGKS) is a binding site for GTP. Residues 70 to 74 (GITID) are G2. The segment at 91–94 (DAPG) is G3. Residues 91–95 (DAPGH) and 153–156 (NKMD) each bind GTP. Residues 153–156 (NKMD) form a G4 region. Residues 194 to 196 (SGF) are G5.

Belongs to the TRAFAC class translation factor GTPase superfamily. Classic translation factor GTPase family. EF-Tu/EF-1A subfamily.

It is found in the cytoplasm. This protein promotes the GTP-dependent binding of aminoacyl-tRNA to the A-site of ribosomes during protein biosynthesis. The protein is Elongation factor 1-alpha 1 (EFA1) of Euplotes crassus.